The following is a 158-amino-acid chain: MLRGQQIWLSNLTQPQTSAGPVPAVESPPALCSTSLPQVCLDPASPALLPKPTWTLSWSRPGSCVMPGAAAASLLSPRTLRLESPRGAGLSLMRPRPFPLICCCSTCSGPPPSTFLATRIRSQPSILSTPGSFPPSGPIWPPPPGGMLPIAALRMYVS.

In terms of biological role, acts by interacting with multiple viral and host proteins to enhance the activity of viral RNA-dependent RNA polymerase. This Hepatitis E virus genotype 1 (isolate Human/Pakistan/Sar-55) (HEV-1) protein is Protein ORF4.